The chain runs to 579 residues: Arginine--tRNA ligase (579 aa).

Positions 123 to 133 match the 'HIGH' region motif; sequence PNLAKEMHVGH.

It belongs to the class-I aminoacyl-tRNA synthetase family. As to quaternary structure, monomer.

It is found in the cytoplasm. It catalyses the reaction tRNA(Arg) + L-arginine + ATP = L-arginyl-tRNA(Arg) + AMP + diphosphate. The protein is Arginine--tRNA ligase of Saccharophagus degradans (strain 2-40 / ATCC 43961 / DSM 17024).